The primary structure comprises 147 residues: Small ribosomal subunit protein eS19 (147 aa).

This sequence belongs to the eukaryotic ribosomal protein eS19 family. In terms of assembly, component of the small ribosomal subunit.

It localises to the cytoplasm. It is found in the nucleus. Functionally, component of the small ribosomal subunit. The ribosome is a large ribonucleoprotein complex responsible for the synthesis of proteins in the cell. Required for pre-rRNA processing and maturation of 40S ribosomal subunits. This is Small ribosomal subunit protein eS19 (rps19) from Ictalurus punctatus (Channel catfish).